The chain runs to 410 residues: Imidazolonepropionase (410 aa).

Fe(3+) contacts are provided by His-73 and His-75. Zn(2+) contacts are provided by His-73 and His-75. 3 residues coordinate 4-imidazolone-5-propanoate: Arg-82, Tyr-145, and His-178. Residue Tyr-145 coordinates N-formimidoyl-L-glutamate. Fe(3+) is bound at residue His-243. His-243 is a Zn(2+) binding site. Residue Gln-246 participates in 4-imidazolone-5-propanoate binding. A Fe(3+)-binding site is contributed by Asp-318. Asp-318 serves as a coordination point for Zn(2+). 2 residues coordinate N-formimidoyl-L-glutamate: Asn-320 and Gly-322. Ser-323 provides a ligand contact to 4-imidazolone-5-propanoate.

Belongs to the metallo-dependent hydrolases superfamily. HutI family. Zn(2+) is required as a cofactor. It depends on Fe(3+) as a cofactor.

It is found in the cytoplasm. The catalysed reaction is 4-imidazolone-5-propanoate + H2O = N-formimidoyl-L-glutamate. It functions in the pathway amino-acid degradation; L-histidine degradation into L-glutamate; N-formimidoyl-L-glutamate from L-histidine: step 3/3. Its function is as follows. Catalyzes the hydrolytic cleavage of the carbon-nitrogen bond in imidazolone-5-propanoate to yield N-formimidoyl-L-glutamate. It is the third step in the universal histidine degradation pathway. This Shewanella baltica (strain OS223) protein is Imidazolonepropionase.